Reading from the N-terminus, the 739-residue chain is Catalase-peroxidase (739 aa).

The disordered stretch occupies residues 1–20; sequence MGSNECPYSRQNANIGGGGQ. The tryptophyl-tyrosyl-methioninium (Trp-Tyr) (with M-243) cross-link spans 94-217; that stretch reads WHSAGTYRVF…LAASHMGLIY (124 aa). The active-site Proton acceptor is His95. Positions 217 to 243 form a cross-link, tryptophyl-tyrosyl-methioninium (Tyr-Met) (with W-94); the sequence is YVNPEGPNKNPDPVLAAKDIRITFGRM. His258 contributes to the heme b binding site.

This sequence belongs to the peroxidase family. Peroxidase/catalase subfamily. Homodimer or homotetramer. The cofactor is heme b. In terms of processing, formation of the three residue Trp-Tyr-Met cross-link is important for the catalase, but not the peroxidase activity of the enzyme.

It localises to the cytoplasm. The enzyme catalyses H2O2 + AH2 = A + 2 H2O. The catalysed reaction is 2 H2O2 = O2 + 2 H2O. Functionally, bifunctional enzyme with both catalase and broad-spectrum peroxidase activity. The protein is Catalase-peroxidase of Emericella nidulans (strain FGSC A4 / ATCC 38163 / CBS 112.46 / NRRL 194 / M139) (Aspergillus nidulans).